A 92-amino-acid chain; its full sequence is RIIa domain-containing protein 1 (92 aa).

One can recognise an RIIa domain in the interval 43-77; the sequence is KEVELLISGFFREMFLKRPDNIPEFAADYFTDPRL.

The polypeptide is RIIa domain-containing protein 1 (RIIAD1) (Bos taurus (Bovine)).